Here is a 365-residue protein sequence, read N- to C-terminus: Inositol 4-methyltransferase (365 aa).

An S-adenosyl-L-methionine-binding site is contributed by Asp-232. The active-site Proton acceptor is His-270.

This sequence belongs to the class I-like SAM-binding methyltransferase superfamily. Cation-independent O-methyltransferase family. In terms of tissue distribution, leaves and roots. The levels found in the leaves are 25 times greater than in the roots.

It carries out the reaction myo-inositol + S-adenosyl-L-methionine = 1D-4-O-methyl-myo-inositol + S-adenosyl-L-homocysteine + H(+). It participates in polyol metabolism; myo-inositol metabolism. Functionally, catalyzes the methylation of myo-inositol into ononitol (1D-4-O-methyl myo-inositol), the first step in the biosynthesis of the cyclic sugar pinitol which has osmoprotective properties. This is Inositol 4-methyltransferase (IMT1) from Mesembryanthemum crystallinum (Common ice plant).